The following is a 756-amino-acid chain: Protein psiP (756 aa).

The N-terminal stretch at Met-1–Gly-23 is a signal peptide. At Gln-24 to Thr-692 the chain is on the extracellular side. An N-linked (GlcNAc...) asparagine glycan is attached at Asn-82. The PA14 domain occupies Leu-126–Asp-281. N-linked (GlcNAc...) asparagine glycosylation is found at Asn-359, Asn-483, Asn-564, and Asn-663. The chain crosses the membrane as a helical span at residues Ala-693–Gly-713. Residues Lys-714–Asn-756 are Cytoplasmic-facing. Positions Ser-730–Arg-744 are enriched in polar residues. Positions Ser-730–Asn-756 are disordered.

The protein belongs to the prespore-cell-inducing factor family.

The protein localises to the membrane. The sequence is that of Protein psiP (psiP) from Dictyostelium discoideum (Social amoeba).